We begin with the raw amino-acid sequence, 369 residues long: MANVTLSSVYKAFGEAVISRDINLEIDDGEFVVFVGPSGCGKSTLLRMIAGLEDITSGELLIGGKRMNEVPPSERGIGMVFQSYALYPHLSVAENMSFGLKLAGVKKAEIYQRVNQVAEVLQLAHLLDRRPKALSGGQRQRVAIGRTLVSEPDVFLLDEPLSNLDAALRVQMRIEISRLHKRLERTMIYVTHDQVEAMTLADKIVVLDAGNIAQVGKPLELYHYPANRFVAGFIGSPKMNFLPVKVTAAEPRQVQIELPNHQRVWLPVEGDQVQVGANMSLGIRPEHLLPSSASEVTLEGEIQVVEQLGNETQIHIQIPAIRQNLVYRQNDVVLVEEGATFSIGLPPHRCHLFREDGTACKRLYQELGV.

The region spanning 4–234 (VTLSSVYKAF…PANRFVAGFI (231 aa)) is the ABC transporter domain. 36–43 (GPSGCGKS) provides a ligand contact to ATP.

Belongs to the ABC transporter superfamily. Maltooligosaccharide importer (TC 3.A.1.1.1) family. The complex is composed of two ATP-binding proteins (MalK), two transmembrane proteins (MalG and MalK) and a solute-binding protein (MalE).

The protein localises to the cell inner membrane. It catalyses the reaction D-maltose(out) + ATP + H2O = D-maltose(in) + ADP + phosphate + H(+). Its function is as follows. Part of the ABC transporter complex MalEFGK involved in maltose/maltodextrin import. Responsible for energy coupling to the transport system. This is Maltose/maltodextrin import ATP-binding protein MalK from Yersinia pestis bv. Antiqua (strain Antiqua).